The sequence spans 70 residues: Sec-independent protein translocase protein TatA (70 aa).

Residues 1 to 21 (MAIGVNQLLIILVIIVLLFGA) form a helical membrane-spanning segment.

The protein belongs to the TatA/E family. The Tat system comprises two distinct complexes: a TatABC complex, containing multiple copies of TatA, TatB and TatC subunits, and a separate TatA complex, containing only TatA subunits. Substrates initially bind to the TatABC complex, which probably triggers association of the separate TatA complex to form the active translocon.

The protein resides in the cell inner membrane. Functionally, part of the twin-arginine translocation (Tat) system that transports large folded proteins containing a characteristic twin-arginine motif in their signal peptide across membranes. TatA could form the protein-conducting channel of the Tat system. This is Sec-independent protein translocase protein TatA from Campylobacter curvus (strain 525.92).